The chain runs to 415 residues: Fructose-like permease IIC component (415 aa).

Over 1–46 (MAIKKRSATVVPGASGAAAAVKNLQASKSSFWGELPQHVMSGISRM) the chain is Cytoplasmic. One can recognise a PTS EIIC type-2 domain in the interval 35-415 (LPQHVMSGIS…RKGKLLIDSL (381 aa)). A helical transmembrane segment spans residues 47–67 (VPTLIMGGVILAFSQLIAYSW). Residues 68-101 (LKIPAEIGIMDALNSGKFSGFDLSLLKFAWLSQS) are Periplasmic-facing. A helical membrane pass occupies residues 102-122 (FGGVLFGFAIPMFAAFVANSI). At 123-126 (GGKL) the chain is on the cytoplasmic side. Residues 127–147 (AFPAGFIGGLMSTQPTQLLNF) form a helical membrane-spanning segment. Residues 148–157 (DPSTMQWATS) lie on the Periplasmic side of the membrane. Residues 158–178 (SPVPSTFIGALIISIVAGYLV) form a helical membrane-spanning segment. The Cytoplasmic segment spans residues 179-197 (KWMNQKIQLPDFLLAFKTT). Residues 198–218 (FLLPILSAIFVMLAMYYVITP) form a helical membrane-spanning segment. Over 219 to 237 (FGGWINGGIRTVLTAAGEK) the chain is Periplasmic. The helical transmembrane segment at 238–258 (GALMYAMGIAAATAIDLGGPI) threads the bilayer. Over 259–276 (NKAAGFVAFSFTTDHVLP) the chain is Cytoplasmic. A helical membrane pass occupies residues 277–297 (VTARSIAIVIPPIGLGLATII). Over 298-318 (DRRLTGKRLFNAQLYPQGKTA) the chain is Periplasmic. The helical transmembrane segment at 319–339 (MFLAFMGISEGAIPFALESPI) threads the bilayer. The Cytoplasmic segment spans residues 340–341 (TA). The helical transmembrane segment at 342–362 (IPSYMVGAIVGSTAAVWLGAV) threads the bilayer. Topologically, residues 363 to 378 (QWFPESAIWAWPLVTN) are periplasmic. A helical transmembrane segment spans residues 379–399 (LGVYMAGIALGAIITALMVVF). At 400–415 (LRLMMFRKGKLLIDSL) the chain is on the cytoplasmic side.

The protein localises to the cell inner membrane. In terms of biological role, the phosphoenolpyruvate-dependent sugar phosphotransferase system (PTS), a major carbohydrate active -transport system, catalyzes the phosphorylation of incoming sugar substrates concomitant with their translocation across the cell membrane. This Shigella flexneri protein is Fructose-like permease IIC component (fryC).